The following is a 113-amino-acid chain: U11-theraphotoxin-Hhn1a (113 aa).

An N-terminal signal peptide occupies residues 1-21 (MNTVRVTFLLVFVLAVSLGQA). Residues 22–74 (DKDENRMEMQEKTEQGKGYLDFAENLLPQKLEELEAKLLEEDSEESRNSRQKR) constitute a propeptide that is removed on maturation. Positions 59 to 69 (LLEEDSEESRN) are enriched in basic and acidic residues. Positions 59–83 (LLEEDSEESRNSRQKRCIGEGVPCD) are disordered. Disulfide bonds link Cys-75–Cys-90, Cys-82–Cys-95, and Cys-89–Cys-110.

The protein belongs to the neurotoxin 14 (magi-1) family. 01 (HNTX-16) subfamily. Expressed by the venom gland.

Its subcellular location is the secreted. Its function is as follows. Probable ion channel inhibitor. This chain is U11-theraphotoxin-Hhn1a, found in Cyriopagopus hainanus (Chinese bird spider).